The chain runs to 418 residues: Tyrosine--tRNA ligase (418 aa).

Tyr-39 is an L-tyrosine binding site. Residues 44–53 (CTADSLHVGS) carry the 'HIGH' region motif. The L-tyrosine site is built by Tyr-176 and Gln-180. Positions 236–240 (KMGKT) match the 'KMSKS' region motif. Lys-239 is an ATP binding site. One can recognise an S4 RNA-binding domain in the interval 350–416 (LPLAEMMRAT…KKRHALIRVL (67 aa)).

It belongs to the class-I aminoacyl-tRNA synthetase family. TyrS type 1 subfamily. In terms of assembly, homodimer.

The protein localises to the cytoplasm. It carries out the reaction tRNA(Tyr) + L-tyrosine + ATP = L-tyrosyl-tRNA(Tyr) + AMP + diphosphate + H(+). Its function is as follows. Catalyzes the attachment of tyrosine to tRNA(Tyr) in a two-step reaction: tyrosine is first activated by ATP to form Tyr-AMP and then transferred to the acceptor end of tRNA(Tyr). The protein is Tyrosine--tRNA ligase of Rhodospirillum rubrum (strain ATCC 11170 / ATH 1.1.1 / DSM 467 / LMG 4362 / NCIMB 8255 / S1).